The primary structure comprises 233 residues: Small ribosomal subunit protein uS2c (233 aa).

It belongs to the universal ribosomal protein uS2 family.

The protein resides in the plastid. It localises to the apicoplast. This Toxoplasma gondii protein is Small ribosomal subunit protein uS2c.